The following is a 559-amino-acid chain: Frizzled-5 (559 aa).

The first 26 residues, 1–26 (MGSFRSGVFALSFVVLLLDYFAPAQA), serve as a signal peptide directing secretion. The Extracellular portion of the chain corresponds to 27–220 (ASKAIVCQEI…QPYFTQDEKM (194 aa)). The 122-residue stretch at 28–149 (SKAIVCQEIT…GDPDTLCMYY (122 aa)) folds into the FZ domain. 5 disulfides stabilise this stretch: C33-C94, C41-C87, C78-C116, C105-C146, and C109-C133. N-linked (GlcNAc...) asparagine glycosylation is present at N47. N150 carries N-linked (GlcNAc...) asparagine glycosylation. The chain crosses the membrane as a helical span at residues 221–241 (FVTFWIGLWSILCFISTFTTV). Over 242 to 257 (ATFLIDMERFRYPERP) the chain is Cytoplasmic. The helical transmembrane segment at 258–278 (IIFLSACYLFVSIGYVVRLIV) threads the bilayer. The Extracellular segment spans residues 279-301 (GHENVACNKDHIHYETTGPALCT). The helical transmembrane segment at 302 to 322 (IVFLLIYFFGMASSIWWVILT) threads the bilayer. Residues 323–343 (FTWFLAAGMKWGNEAIASYSQ) are Cytoplasmic-facing. A helical membrane pass occupies residues 344-364 (YFHMAAWLIPSVKSIAVLALS). At 365–387 (SVDGDPVAGICYVGNQNLDNLRG) the chain is on the extracellular side. Residues 388 to 408 (FVLAPLVVYLFSGTMFLLAGF) form a helical membrane-spanning segment. Over 409–434 (VSLFRIRSVIKQGGTKTDKLEKLMIR) the chain is Cytoplasmic. A helical transmembrane segment spans residues 435–455 (IGIFSVLYTVPATIVVACYIY). The Extracellular portion of the chain corresponds to 456–483 (EQHYREHWEKTHNCSCPGDKQRYRPDYA). N468 carries an N-linked (GlcNAc...) asparagine glycan. The helical transmembrane segment at 484-504 (VFMLKYLMCLVVGITSGVWIW) threads the bilayer. Residues 505–559 (SGKTLESWKRFTGRCCRNSKPINASAYSEASRALTPRTGLSNLTLPHKQVPLSHV) lie on the Cytoplasmic side of the membrane. Residues 507–512 (KTLESW) carry the Lys-Thr-X-X-X-Trp motif, mediates interaction with the PDZ domain of Dvl family members motif. A PDZ-binding motif is present at residues 557–559 (SHV).

This sequence belongs to the G-protein coupled receptor Fz/Smo family. Expressed in retina.

It localises to the cell membrane. The protein localises to the golgi apparatus membrane. Receptor for Wnt proteins that functions in the canonical Wnt/beta-catenin signaling pathway. The canonical Wnt/beta-catenin signaling pathway leads to the activation of disheveled proteins, inhibition of GSK-3 kinase, nuclear accumulation of beta-catenin and activation of Wnt target genes. A second signaling pathway involving PKC and calcium fluxes has been seen for some family members, but it is not yet clear if it represents a distinct pathway or if it can be integrated in the canonical pathway, as PKC seems to be required for Wnt-mediated inactivation of GSK-3 kinase. Both pathways seem to involve interactions with G-proteins. May be involved in transduction and intercellular transmission of polarity information during tissue morphogenesis and/or in differentiated tissues. The chain is Frizzled-5 (fzd5) from Xenopus laevis (African clawed frog).